The chain runs to 381 residues: Spermidine/putrescine import ATP-binding protein PotA (381 aa).

Positions valine 19–isoleucine 249 constitute an ABC transporter domain. Glycine 51–threonine 58 contributes to the ATP binding site.

This sequence belongs to the ABC transporter superfamily. Spermidine/putrescine importer (TC 3.A.1.11.1) family. As to quaternary structure, the complex is composed of two ATP-binding proteins (PotA), two transmembrane proteins (PotB and PotC) and a solute-binding protein (PotD).

It localises to the cell inner membrane. The catalysed reaction is ATP + H2O + polyamine-[polyamine-binding protein]Side 1 = ADP + phosphate + polyamineSide 2 + [polyamine-binding protein]Side 1.. In terms of biological role, part of the ABC transporter complex PotABCD involved in spermidine/putrescine import. Responsible for energy coupling to the transport system. The protein is Spermidine/putrescine import ATP-binding protein PotA of Trichodesmium erythraeum (strain IMS101).